A 214-amino-acid polypeptide reads, in one-letter code: Methyltransferase HEMK2 (214 aa).

Thr29, Glu51, Gly53, Asp77, Asp103, Leu104, and Asn122 together coordinate S-adenosyl-L-methionine. Asn122 contacts a protein.

This sequence belongs to the eukaryotic/archaeal PrmC-related family. Heterodimer; heterodimerization with TRMT112 is required for S-adenosyl-L-methionine-binding. Post-translationally, ubiquitinated, leading to its degradation by the proteasome. Highly expressed in undifferentiated embryonic stem cells (at protein level). Also expressed in testis and brain, weakly expressed in differentiated embryonic stem cells and kidney. Not expressed in muscle, heart, placenta, pancreas, lung and stomach.

It localises to the nucleus. The catalysed reaction is L-lysyl-[histone] + S-adenosyl-L-methionine = N(6)-methyl-L-lysyl-[histone] + S-adenosyl-L-homocysteine + H(+). It carries out the reaction L-glutaminyl-[protein] + S-adenosyl-L-methionine = N(5)-methyl-L-glutaminyl-[protein] + S-adenosyl-L-homocysteine + H(+). It catalyses the reaction methylarsonous acid + S-adenosyl-L-methionine = dimethylarsinate + S-adenosyl-L-homocysteine + 2 H(+). Methyltransferase that can methylate proteins and, to a lower extent, arsenic. Catalytic subunit of a heterodimer with TRMT112, which monomethylates 'Lys-12' of histone H4 (H4K12me1), a modification present at the promoters of numerous genes encoding cell cycle regulators. Catalytic subunit of a heterodimer with TRMT112, which catalyzes N5-methylation of Glu residue of proteins with a Gly-Gln-Xaa-Xaa-Xaa-Arg motif. Methylates ETF1 on 'Gln-185'; ETF1 needs to be complexed to ERF3 in its GTP-bound form to be efficiently methylated. May also play a role in the modulation of arsenic-induced toxicity by mediating the conversion of monomethylarsonous acid (3+) into the less toxic dimethylarsonic acid. It however only plays a limited role in arsenic metabolism compared with AS3MT. The polypeptide is Methyltransferase HEMK2 (Mus musculus (Mouse)).